The primary structure comprises 227 residues: Threonine--tRNA ligase (227 aa).

Residues 1 to 120 are catalytic; the sequence is DIELKLSTRP…LIEHYEGAFP (120 aa).

It belongs to the class-II aminoacyl-tRNA synthetase family. Homodimer.

The protein localises to the cytoplasm. The catalysed reaction is tRNA(Thr) + L-threonine + ATP = L-threonyl-tRNA(Thr) + AMP + diphosphate + H(+). Functionally, catalyzes the attachment of threonine to tRNA(Thr) in a two-step reaction: L-threonine is first activated by ATP to form Thr-AMP and then transferred to the acceptor end of tRNA(Thr). Also edits incorrectly charged L-seryl-tRNA(Thr). The polypeptide is Threonine--tRNA ligase (Pseudomonas syringae pv. syringae).